Here is a 502-residue protein sequence, read N- to C-terminus: 4,4'-diapophytoene desaturase (4,4'-diaponeurosporene-forming) (502 aa).

Val-5 to Ala-17 is a binding site for FAD.

It belongs to the carotenoid/retinoid oxidoreductase family. CrtN subfamily.

It catalyses the reaction 15-cis-4,4'-diapophytoene + 3 FAD + 3 H(+) = all-trans-4,4'-diaponeurosporene + 3 FADH2. The protein operates within carotenoid biosynthesis; staphyloxanthin biosynthesis; staphyloxanthin from farnesyl diphosphate: step 2/5. Involved in the biosynthesis of the yellow-orange carotenoid staphyloxanthin, which plays a role in the virulence via its protective function against oxidative stress. Catalyzes three successive dehydrogenation reactions that lead to the introduction of three double bonds into 4,4'-diapophytoene (dehydrosqualene), with 4,4'-diapophytofluene and 4,4'-diapo-zeta-carotene as intermediates, and 4,4'-diaponeurosporene (the major deep-yellow pigment in staphylococci strains) as the end product. This chain is 4,4'-diapophytoene desaturase (4,4'-diaponeurosporene-forming), found in Staphylococcus aureus (strain MRSA252).